We begin with the raw amino-acid sequence, 544 residues long: Chaperonin GroEL (544 aa).

Residues Thr-30–Pro-33, Lys-51, Asp-87–Thr-91, Gly-415, and Asp-495 each bind ATP.

Belongs to the chaperonin (HSP60) family. In terms of assembly, forms a cylinder of 14 subunits composed of two heptameric rings stacked back-to-back. Interacts with the co-chaperonin GroES.

The protein localises to the cytoplasm. It carries out the reaction ATP + H2O + a folded polypeptide = ADP + phosphate + an unfolded polypeptide.. Its function is as follows. Together with its co-chaperonin GroES, plays an essential role in assisting protein folding. The GroEL-GroES system forms a nano-cage that allows encapsulation of the non-native substrate proteins and provides a physical environment optimized to promote and accelerate protein folding. In Aeromonas salmonicida, this protein is Chaperonin GroEL.